Consider the following 241-residue polypeptide: Phycocyanobilin:ferredoxin oxidoreductase (241 aa).

The protein belongs to the HY2 family.

It carries out the reaction (2R,3Z)-phycocyanobilin + 4 oxidized [2Fe-2S]-[ferredoxin] = biliverdin IXalpha + 4 reduced [2Fe-2S]-[ferredoxin] + 4 H(+). In terms of biological role, catalyzes the four-electron reduction of biliverdin IX-alpha (2-electron reduction at both the A and D rings); the reaction proceeds via an isolatable 2-electron intermediate, 181,182-dihydrobiliverdin. This is Phycocyanobilin:ferredoxin oxidoreductase from Prochlorococcus marinus (strain MIT 9312).